The sequence spans 753 residues: Polyribonucleotide nucleotidyltransferase (753 aa).

2 residues coordinate Mg(2+): Asp543 and Asp549. One can recognise a KH domain in the interval 609-668 (PRITTVKIPVAKIGELIGPKGKNINALTEETGANISIEDDGTVFISAADGASAEAAIEKI). In terms of domain architecture, S1 motif spans 680-749 (GERFLGTVVK…NRGKISLVPV (70 aa)).

It belongs to the polyribonucleotide nucleotidyltransferase family. The cofactor is Mg(2+).

The protein localises to the cytoplasm. It catalyses the reaction RNA(n+1) + phosphate = RNA(n) + a ribonucleoside 5'-diphosphate. In terms of biological role, involved in mRNA degradation. Catalyzes the phosphorolysis of single-stranded polyribonucleotides processively in the 3'- to 5'-direction. This chain is Polyribonucleotide nucleotidyltransferase, found in Corynebacterium glutamicum (strain ATCC 13032 / DSM 20300 / JCM 1318 / BCRC 11384 / CCUG 27702 / LMG 3730 / NBRC 12168 / NCIMB 10025 / NRRL B-2784 / 534).